The sequence spans 253 residues: CD151 antigen (253 aa).

The Cytoplasmic segment spans residues 1–18 (MGEFNEKKTTCGTVCLKY). S-palmitoyl cysteine attachment occurs at residues Cys-11 and Cys-15. The chain crosses the membrane as a helical span at residues 19–39 (LLFTYNCCFWLAGLAVMAVGI). The Extracellular segment spans residues 40-57 (WTLALKSDYISLLASGTY). A helical transmembrane segment spans residues 58–78 (LATAYILVVAGAVVMVTGVLG). Topologically, residues 79–91 (CCATFKERRNLLR) are cytoplasmic. A helical membrane pass occupies residues 92-112 (LYFILLLIIFLLEIIAGVLAY). The Extracellular portion of the chain corresponds to 113-221 (VYYQQLNTEL…LETFIQEHLR (109 aa)). The N-linked (GlcNAc...) asparagine glycan is linked to Asn-159. A helical membrane pass occupies residues 222–242 (VIGAVGTGIACVQVFGMIFTC). Residues Cys-242 and Cys-243 are each lipidated (S-palmitoyl cysteine). Residues 243–253 (CLYRSLKLEHY) lie on the Cytoplasmic side of the membrane.

The protein belongs to the tetraspanin (TM4SF) family. In terms of assembly, interacts with integrins ITGA3:ITGB1, ITGA5:ITGB1, ITGA3:ITGB1 and ITGA6:ITGB4 and with CD9 and CD181. Interacts (via the second extracellular domain) with integrin ITGAV:ITGB3. Interacts with ITGA3; this interaction modulates ITGA3 glycosylation pattern. Interacts with F11R. Interacts with RAC1 and CDC42; these interactions mediate physical association of RAC1 and CDC42 with integrin adhesion receptor complexes. In terms of processing, palmitoylated. Palmitoylation by ZDHHC2 regulates CD151 expression, association with other tetraspanin family proteins and function in cell adhesion. Post-translationally, ubiquitinated by RNF128 on lysine residues present in the tetraspanin amino terminus via 'Lys-48'-linked ubiquitin leading to proteasomal degradation.

It localises to the cell membrane. Its function is as follows. Structural component of specialized membrane microdomains known as tetraspanin-enriched microdomains (TERMs), which act as platforms for receptor clustering and signaling. Plays a role in various cellular and molecular mechanism through its association with both integrin and non-integrin proteins. These interactions facilitate critical cellular functions, including cell-to-cell communication, wound healing, platelet aggregation, trafficking, cell motility, and angiogenesis. Via interaction with JAM-A/F11R and integrin ITGA3:ITGB1, promotes the recruitment of signaling molecules such as RAC1, CDC42 and RhoGTPases to facilitate the polarization of epithelial cells and the reorganization of the actin cytoskeleton, which are critical steps in cell migration process. Regulates the glycosylation pattern of ITGA3:ITGB1 thereby modulating its activity. Plays an essential role in the maintenance of central laminin-binding integrin ITGA6:ITGB4-containing adhesion complexes. Essential for the proper assembly of the glomerular and tubular basement membranes in kidney. Contributes to T-cell activation by modulating integrin signaling leading to activation of downstream targets PTK2 and MAPK1/MAPK3. The protein is CD151 antigen (CD151) of Chlorocebus aethiops (Green monkey).